A 140-amino-acid chain; its full sequence is Organic hydroperoxide resistance protein-like (140 aa).

Belongs to the OsmC/Ohr family.

The sequence is that of Organic hydroperoxide resistance protein-like from Staphylococcus aureus (strain USA300).